The primary structure comprises 304 residues: Recombination-associated protein RdgC (304 aa).

It belongs to the RdgC family.

Its subcellular location is the cytoplasm. It localises to the nucleoid. In terms of biological role, may be involved in recombination. This Shewanella baltica (strain OS223) protein is Recombination-associated protein RdgC.